Here is a 308-residue protein sequence, read N- to C-terminus: Ribosomal RNA large subunit methyltransferase F (308 aa).

It belongs to the methyltransferase superfamily. METTL16/RlmF family.

It is found in the cytoplasm. The catalysed reaction is adenosine(1618) in 23S rRNA + S-adenosyl-L-methionine = N(6)-methyladenosine(1618) in 23S rRNA + S-adenosyl-L-homocysteine + H(+). Its function is as follows. Specifically methylates the adenine in position 1618 of 23S rRNA. This is Ribosomal RNA large subunit methyltransferase F from Salmonella arizonae (strain ATCC BAA-731 / CDC346-86 / RSK2980).